The sequence spans 322 residues: MLNSFKLSLQYILPKLWLTRLAGWGASKRAGWLTKLVIDLFVKYYKVDMKEAQKPDTASYRTFNEFFVRPLRDEVRPIDTDPNVLVMPADGVISQLGKIEEDKILQAKGHNYSLEALLAGNYLMADLFRNGTFVTTYLSPRDYHRVHMPCNGILREMIYVPGDLFSVNHLTAQNVPNLFARNERVICLFDTEFGPMAQILVGATIVGSIETVWAGTITPPREGIIKRWTWPAGENDGSVALLKGQEMGRFKLGSTVINLFAPGKVNLVEQLESLSVTKIGQPLAVSTETFVTPDSEPAPLPAEEIEAEHDASPLVDDKKDQV.

Catalysis depends on charge relay system; for autoendoproteolytic cleavage activity residues Asp-90, His-147, and Ser-254. Catalysis depends on Ser-254, which acts as the Schiff-base intermediate with substrate; via pyruvic acid; for decarboxylase activity. Pyruvic acid (Ser); by autocatalysis is present on Ser-254. Residues 290 to 322 (FVTPDSEPAPLPAEEIEAEHDASPLVDDKKDQV) form a disordered region. The segment covering 308–322 (EHDASPLVDDKKDQV) has biased composition (basic and acidic residues).

The protein belongs to the phosphatidylserine decarboxylase family. PSD-B subfamily. Prokaryotic type I sub-subfamily. Heterodimer of a large membrane-associated beta subunit and a small pyruvoyl-containing alpha subunit. It depends on pyruvate as a cofactor. Post-translationally, is synthesized initially as an inactive proenzyme. Formation of the active enzyme involves a self-maturation process in which the active site pyruvoyl group is generated from an internal serine residue via an autocatalytic post-translational modification. Two non-identical subunits are generated from the proenzyme in this reaction, and the pyruvate is formed at the N-terminus of the alpha chain, which is derived from the carboxyl end of the proenzyme. The autoendoproteolytic cleavage occurs by a canonical serine protease mechanism, in which the side chain hydroxyl group of the serine supplies its oxygen atom to form the C-terminus of the beta chain, while the remainder of the serine residue undergoes an oxidative deamination to produce ammonia and the pyruvoyl prosthetic group on the alpha chain. During this reaction, the Ser that is part of the protease active site of the proenzyme becomes the pyruvoyl prosthetic group, which constitutes an essential element of the active site of the mature decarboxylase.

It is found in the cell membrane. The catalysed reaction is a 1,2-diacyl-sn-glycero-3-phospho-L-serine + H(+) = a 1,2-diacyl-sn-glycero-3-phosphoethanolamine + CO2. The protein operates within phospholipid metabolism; phosphatidylethanolamine biosynthesis; phosphatidylethanolamine from CDP-diacylglycerol: step 2/2. In terms of biological role, catalyzes the formation of phosphatidylethanolamine (PtdEtn) from phosphatidylserine (PtdSer). The sequence is that of Phosphatidylserine decarboxylase proenzyme from Escherichia fergusonii (strain ATCC 35469 / DSM 13698 / CCUG 18766 / IAM 14443 / JCM 21226 / LMG 7866 / NBRC 102419 / NCTC 12128 / CDC 0568-73).